We begin with the raw amino-acid sequence, 341 residues long: Thiamine-phosphate synthase (341 aa).

The tract at residues 1-123 (MAVVEEQVVL…AAAAKEWRYR (123 aa)) is unknown. Positions 61–80 (AARDTPHDPGTGLEHPDEGV) are disordered. The tract at residues 124 to 341 (VYTLESTATG…AWFLERLNRG (218 aa)) is thiamine-phosphate synthase. Residues 171–175 (QLREK) and N203 contribute to the 4-amino-2-methyl-5-(diphosphooxymethyl)pyrimidine site. Positions 204 and 223 each coordinate Mg(2+). S242 contacts 4-amino-2-methyl-5-(diphosphooxymethyl)pyrimidine. 268–270 (TPT) lines the 2-[(2R,5Z)-2-carboxy-4-methylthiazol-5(2H)-ylidene]ethyl phosphate pocket. K271 is a binding site for 4-amino-2-methyl-5-(diphosphooxymethyl)pyrimidine. Residue G298 coordinates 2-[(2R,5Z)-2-carboxy-4-methylthiazol-5(2H)-ylidene]ethyl phosphate.

Belongs to the thiamine-phosphate synthase family. Mg(2+) serves as cofactor.

It carries out the reaction 2-[(2R,5Z)-2-carboxy-4-methylthiazol-5(2H)-ylidene]ethyl phosphate + 4-amino-2-methyl-5-(diphosphooxymethyl)pyrimidine + 2 H(+) = thiamine phosphate + CO2 + diphosphate. The enzyme catalyses 2-(2-carboxy-4-methylthiazol-5-yl)ethyl phosphate + 4-amino-2-methyl-5-(diphosphooxymethyl)pyrimidine + 2 H(+) = thiamine phosphate + CO2 + diphosphate. It catalyses the reaction 4-methyl-5-(2-phosphooxyethyl)-thiazole + 4-amino-2-methyl-5-(diphosphooxymethyl)pyrimidine + H(+) = thiamine phosphate + diphosphate. It functions in the pathway cofactor biosynthesis; thiamine diphosphate biosynthesis; thiamine phosphate from 4-amino-2-methyl-5-diphosphomethylpyrimidine and 4-methyl-5-(2-phosphoethyl)-thiazole: step 1/1. Its function is as follows. Condenses 4-methyl-5-(beta-hydroxyethyl)thiazole monophosphate (THZ-P) and 2-methyl-4-amino-5-hydroxymethyl pyrimidine pyrophosphate (HMP-PP) to form thiamine monophosphate (TMP). In Gloeobacter violaceus (strain ATCC 29082 / PCC 7421), this protein is Thiamine-phosphate synthase.